We begin with the raw amino-acid sequence, 260 residues long: uncharacterized protein (260 aa).

A signal peptide spans 1-22 (MGYIKRIGLYISIFILIVMVAG). Cys-23 carries the N-palmitoyl cysteine lipid modification. A lipid anchor (S-diacylglycerol cysteine) is attached at Cys-23.

This sequence belongs to the staphylococcal tandem lipoprotein family.

Its subcellular location is the cell membrane. This is an uncharacterized protein from Staphylococcus aureus (strain bovine RF122 / ET3-1).